The following is a 117-amino-acid chain: Large ribosomal subunit protein bL20 (117 aa).

Belongs to the bacterial ribosomal protein bL20 family.

Functionally, binds directly to 23S ribosomal RNA and is necessary for the in vitro assembly process of the 50S ribosomal subunit. It is not involved in the protein synthesizing functions of that subunit. The sequence is that of Large ribosomal subunit protein bL20 from Rickettsia rickettsii (strain Iowa).